The chain runs to 223 residues: UPF0173 metal-dependent hydrolase Amet_4625 (223 aa).

It belongs to the UPF0173 family.

This is UPF0173 metal-dependent hydrolase Amet_4625 from Alkaliphilus metalliredigens (strain QYMF).